The following is a 72-amino-acid chain: Large ribosomal subunit protein uL29 (72 aa).

Belongs to the universal ribosomal protein uL29 family.

In Caldicellulosiruptor bescii (strain ATCC BAA-1888 / DSM 6725 / KCTC 15123 / Z-1320) (Anaerocellum thermophilum), this protein is Large ribosomal subunit protein uL29.